Reading from the N-terminus, the 122-residue chain is Large ribosomal subunit protein uL14 (122 aa).

The protein belongs to the universal ribosomal protein uL14 family. Part of the 50S ribosomal subunit. Forms a cluster with proteins L3 and L19. In the 70S ribosome, L14 and L19 interact and together make contacts with the 16S rRNA in bridges B5 and B8.

Binds to 23S rRNA. Forms part of two intersubunit bridges in the 70S ribosome. This chain is Large ribosomal subunit protein uL14, found in Bacillus mycoides (strain KBAB4) (Bacillus weihenstephanensis).